A 188-amino-acid polypeptide reads, in one-letter code: Inner kinetochore subunit cnl2 (188 aa).

The protein belongs to the NKP2 family. In terms of assembly, component of the inner kinetochore constitutive centromere-associated network (CCAN) (also known as central kinetochore Sim4 complex in fission yeast), which is composed of at least cnl2, cnp3, cnp20, fta1, fta2, fta3, fta4, fta6, fta7, mal2, mhf1, mhf2, mis6, mis15, mis17, sim4 and wip1.

The protein resides in the cytoplasm. The protein localises to the nucleus. It localises to the chromosome. Its subcellular location is the centromere. It is found in the kinetochore. Functionally, component of the kinetochore, a multiprotein complex that assembles on centromeric DNA and attaches chromosomes to spindle microtubules, mediating chromosome segregation and sister chromatid segregation during meiosis and mitosis. Component of the inner kinetochore constitutive centromere-associated network (CCAN), which serves as a structural platform for outer kinetochore assembly. In Schizosaccharomyces pombe (strain 972 / ATCC 24843) (Fission yeast), this protein is Inner kinetochore subunit cnl2 (cnl2).